Here is a 951-residue protein sequence, read N- to C-terminus: Serine/threonine-protein kinase ATG1 (951 aa).

The Protein kinase domain occupies 22–327; that stretch reads FTINEEIGKG…FPEYFAHPVV (306 aa). Residues 28 to 36 and Lys-51 each bind ATP; that span reads IGKGSFATV. Asp-165 (proton acceptor) is an active-site residue. Disordered regions lie at residues 343-375, 387-458, 514-573, and 924-951; these read IITP…PVET, EQAP…YDEQ, HIPK…SSPS, and HQSM…TPPH. 2 stretches are compositionally biased toward basic and acidic residues: residues 359–368 and 432–442; these read SLRERQRENP and PRQRDRTERHY. Composition is skewed to polar residues over residues 547–573 and 939–951; these read AQGN…SSPS and GGTT…TPPH.

It belongs to the protein kinase superfamily. Ser/Thr protein kinase family. APG1/unc-51/ULK1 subfamily. Homodimer. Forms a ternary complex with ATG13 and ATG17.

Its subcellular location is the cytoplasm. It is found in the preautophagosomal structure membrane. The enzyme catalyses L-seryl-[protein] + ATP = O-phospho-L-seryl-[protein] + ADP + H(+). It catalyses the reaction L-threonyl-[protein] + ATP = O-phospho-L-threonyl-[protein] + ADP + H(+). Functionally, serine/threonine protein kinase involved in the cytoplasm to vacuole transport (Cvt) and found to be essential in autophagy, where it is required for the formation of autophagosomes. Involved in the clearance of protein aggregates which cannot be efficiently cleared by the proteasome. Required for selective autophagic degradation of the nucleus (nucleophagy) as well as for mitophagy which contributes to regulate mitochondrial quantity and quality by eliminating the mitochondria to a basal level to fulfill cellular energy requirements and preventing excess ROS production. Also involved in endoplasmic reticulum-specific autophagic process, in selective removal of ER-associated degradation (ERAD) substrates. Plays a key role in ATG9 and ATG23 cycling through the pre-autophagosomal structure and is necessary to promote ATG18 binding to ATG9 through phosphorylation of ATG9. Catalyzes phosphorylation of ATG4, decreasing the interaction between ATG4 and ATG8 and impairing deconjugation of PE-conjugated forms of ATG8. This Sclerotinia sclerotiorum (strain ATCC 18683 / 1980 / Ss-1) (White mold) protein is Serine/threonine-protein kinase ATG1.